Consider the following 192-residue polypeptide: Ion-translocating oxidoreductase complex subunit A (192 aa).

Helical transmembrane passes span 5-25 (ILLL…FLGL), 39-59 (IGMG…AYLV), 67-87 (LGIE…VVQF), 102-122 (LLGI…VALL), 134-154 (IIYG…FASM), and 171-191 (SIAM…TGLV).

This sequence belongs to the NqrDE/RnfAE family. The complex is composed of six subunits: RnfA, RnfB, RnfC, RnfD, RnfE and RnfG.

Its subcellular location is the cell inner membrane. Functionally, part of a membrane-bound complex that couples electron transfer with translocation of ions across the membrane. In Vibrio campbellii (strain ATCC BAA-1116), this protein is Ion-translocating oxidoreductase complex subunit A.